We begin with the raw amino-acid sequence, 301 residues long: Triplex capsid protein 2 (301 aa).

Belongs to the herpesviridae TRX2 protein family. As to quaternary structure, interacts with TRX1 and major capisd protein/MCP.

It is found in the virion. The protein localises to the host nucleus. Its function is as follows. Structural component of the T=16 icosahedral capsid. The capsid is composed of pentamers and hexamers of major capsid protein/MCP, which are linked together by heterotrimers called triplexes. These triplexes are formed by a single molecule of triplex protein 1/TRX1 and two copies of triplex protein 2/TRX2. Additionally, TRX1 is required for efficient transport of TRX2 to the nucleus, which is the site of capsid assembly. This is Triplex capsid protein 2 from Homo sapiens (Human).